A 1693-amino-acid chain; its full sequence is Non-structural polyprotein pORF1 (1693 aa).

The Alphavirus-like MT domain occupies 56–240 (VFRPEVFWNH…HDVSNLRSWI (185 aa)). Residues 60–240 (EVFWNHPIQR…HDVSNLRSWI (181 aa)) are methyltransferase. The Y-domain stretch occupies residues 241–439 (RTTKVTGDHP…FYAQCRRWLS (199 aa)). A disulfide bond links cysteine 434 and cysteine 481. The segment at 442–509 (FHLDPRVLVF…EAYEGSDVDP (68 aa)) is protease. The zinc-binding stretch occupies residues 510–691 (AESAISDISG…FSPGHVWESA (182 aa)). Histidine 671, glutamate 673, and histidine 686 together coordinate Zn(2+). Residues 712–771 (PSPAQPDLGFTSEPSIPSRAATPTPAAPLPPPAPDPSPTLSAPARGEPAPGATARAPAIT) are disordered. Positions 712–778 (PSPAQPDLGF…AITHQTARHR (67 aa)) are hinge. Over residues 725-735 (PSIPSRAATPT) the composition is skewed to low complexity. The span at 736–748 (PAAPLPPPAPDPS) shows a compositional bias: pro residues. Positions 775–921 (ARHRRLLFTY…LYLPELAARW (147 aa)) constitute a Macro domain. The X-domain stretch occupies residues 785–942 (PDGSKVFAGS…TITEDVARTA (158 aa)). The 149-residue stretch at 934–1082 (ITEDVARTAN…RPDLAPTSWW (149 aa)) folds into the (+)RNA virus helicase ATP-binding domain. Residues 960-1204 (GCRVTPGVVQ…ISDAIVNNFF (245 aa)) are NTPase/helicase. 975 to 982 (GVPGSGKS) is an ATP binding site. One can recognise a (+)RNA virus helicase C-terminal domain in the interval 1083–1216 (HVTHRCPADV…GGEIGHQRPS (134 aa)). Residues 1207 to 1693 (GGEIGHQRPS…LTNSILCRVE (487 aa)) are RNA-directed RNA polymerase. Residues 1454–1565 (SMVFENDFSE…LCSEYRQSPG (112 aa)) form the RdRp catalytic domain.

It belongs to the hepevirus non-structural polyprotein family. In terms of assembly, the protease domain interacts with host EIF2AK4 (via C-terminus); this interaction inhibits dimerization of EIF2AK4 and prevents EIF2AK4-mediated phosphorylation of host EIF2A. The cofactor is Mg(2+). Post-translationally, ORF1 polyprotein does not seem to be processed into distinct enzymatic domains by a viral protease belonging to ORF1, but could be processed by a host serine protease like thrombin.

The protein resides in the host cytoplasm. Its subcellular location is the host perinuclear region. The enzyme catalyses RNA(n) + a ribonucleoside 5'-triphosphate = RNA(n+1) + diphosphate. The catalysed reaction is GTP + S-adenosyl-L-methionine = N(7)-methyl-GTP + S-adenosyl-L-homocysteine. With respect to regulation, putative protease: Inhibited by chymostatin. Functionally, methyltransferase: Displays a capping enzyme activity. This function is necessary since all viral RNAs are synthesized in the cytoplasm, and host capping enzymes are restricted to the nucleus. The enzymatic reaction involves a covalent link between 7-methyl-GMP and the methyltransferase, whereas eukaryotic capping enzymes form a covalent complex only with GMP. Methyltransferase catalyzes transfer of a methyl group from S-adenosylmethionine to GTP and GDP to yield m(7)GTP or m(7)GDP. GDP is a better substrate than GTP. This enzyme also displays guanylyltransferase activity to form a covalent complex, methyltransferase-m(7)GMP, from which 7-methyl-GMP is transferred to the mRNA to create the cap structure. Y-domain: Indispensable for virus replication. Its function is as follows. Putative protease: The putative protease domain although necessary for replication of the virus may not be a protease but rather a structural Zn(2+)-binding domain. Inhibits induction of IFN-beta by MDA5 and RIG-I pathways and down-regulates the expression of MDA5. In terms of biological role, NTPase/helicase: Multi-functional protein that exhibits NTPase and RNA unwinding activities. Hydrolyzes all NTPs efficiently and unwinds RNA duplexes containing 5' overhangs. Possesses a sequence independent RNA-5'-triphosphatase (RTPase) activity suggestive of its role in forming viral cap structure. Also participates in viral genome replication, RNA translocation and genome packaging/unpackaging. Functionally, RNA-directed RNA polymerase: Plays an essential role in the virus replication. Binds to the 3'-end of the genomic RNA to initiate viral replication. In Hepatitis E virus genotype 1 (isolate Human/Pakistan/Sar-55) (HEV-1), this protein is Non-structural polyprotein pORF1.